Consider the following 149-residue polypeptide: Nucleoside diphosphate kinase (149 aa).

Lysine 9, phenylalanine 57, arginine 85, threonine 91, arginine 102, and asparagine 112 together coordinate ATP. Histidine 115 serves as the catalytic Pros-phosphohistidine intermediate.

Belongs to the NDK family. Homotetramer. Requires Mg(2+) as cofactor.

It is found in the cytoplasm. It carries out the reaction dZDP + ATP = dZTP + ADP. It catalyses the reaction a 2'-deoxyribonucleoside 5'-diphosphate + ATP = a 2'-deoxyribonucleoside 5'-triphosphate + ADP. The enzyme catalyses a ribonucleoside 5'-diphosphate + ATP = a ribonucleoside 5'-triphosphate + ADP. Its pathway is purine metabolism. Major role in the synthesis of nucleoside triphosphates other than ATP. The ATP gamma phosphate is transferred to the NDP beta phosphate via a ping-pong mechanism, using a phosphorylated active-site intermediate. Its function is as follows. (Microbial infection) Catalyzes the phosphorylation of dZDP to dZTP, when the bacterium is infected by a phage that produces the substrate for the synthesis of dZTP (2- amino-2'-deoxyadenosine 5'-triphosphate), which is then used by the phage as a DNA polymerase substrate. In Synechococcus elongatus (strain ATCC 33912 / PCC 7942 / FACHB-805) (Anacystis nidulans R2), this protein is Nucleoside diphosphate kinase.